A 307-amino-acid polypeptide reads, in one-letter code: Peroxisomal membrane protein PMP34 (307 aa).

Over 1-9 the chain is Cytoplasmic; sequence MASVLSYES. The interval 1–147 is necessary for targeting to peroxisomes and interaction with PEX19; it reads MASVLSYESL…NEDIIPTNYK (147 aa). 3 Solcar repeats span residues 7–92, 99–192, and 200–294; these read YESL…LKAV, SSTG…LKRQ, and LSSL…LTAA. A helical membrane pass occupies residues 10–30; it reads LVHAVAGAVGSVTAMTVFFPL. Residues 31 to 66 lie on the Lumenal side of the membrane; sequence DTARLRLQVDEKRKSKTTHAVLLEIIKEEGLLAPYR. The chain crosses the membrane as a helical span at residues 67 to 87; that stretch reads GWFPVISSLCCSNFVYFYTFN. Topologically, residues 88-104 are cytoplasmic; the sequence is SLKAVWVKGQRSSTGKD. Residues 105–125 form a helical membrane-spanning segment; the sequence is LVVGFVAGVVNVLLTTPLWVV. Residues 126–160 lie on the Lumenal side of the membrane; the sequence is NTRLKLQGAKFRNEDIIPTNYKGIIDAFHQIIRDE. Residues 161-181 traverse the membrane as a helical segment; that stretch reads GILALWNGTFPSLLLVFNPAI. Topologically, residues 182–202 are cytoplasmic; it reads QFMFYEGLKRQLLKKRMKLSS. The Peroxisome localization signal motif lies at 190–199; sequence KRQLLKKRMK. Residues 203-223 form a helical membrane-spanning segment; that stretch reads LDVFIIGAIAKAIATTVTYPM. Topologically, residues 224–280 are lumenal; that stretch reads QTVQSILRFGRHRLNPENRTLGSLRNVLSLLHQRVKRFGIMGLYKGLEAKLLQTVLT. The segment at 244–307 is necessary for targeting to peroxisomes and interaction with PEX19; the sequence is LGSLRNVLSL…VMGLKSTHKH (64 aa). A helical membrane pass occupies residues 281 to 301; the sequence is AALMFLVYEKLTAATFTVMGL. Over 302 to 307 the chain is Cytoplasmic; the sequence is KSTHKH.

It belongs to the mitochondrial carrier (TC 2.A.29) family. Interacts (via N- and C-terminus peroxisomal targeting regions) with PEX19; the interaction occurs with the newly synthesized SLC25A17 in the cytosol. As to expression, expressed in liver, kidney, heart, spleen, muscle and lung.

The protein localises to the cytoplasm. It localises to the peroxisome membrane. It carries out the reaction AMP(out) + CoA(in) = AMP(in) + CoA(out). The enzyme catalyses 3'-dephospho-CoA(in) + AMP(out) = 3'-dephospho-CoA(out) + AMP(in). The catalysed reaction is acetyl-CoA(in) + AMP(out) = acetyl-CoA(out) + AMP(in). It catalyses the reaction AMP(in) + NAD(+)(out) = AMP(out) + NAD(+)(in). It carries out the reaction FAD(in) + AMP(out) = FAD(out) + AMP(in). The enzyme catalyses FMN(in) + AMP(out) = FMN(out) + AMP(in). The catalysed reaction is AMP(in) + ADP(out) = AMP(out) + ADP(in). It catalyses the reaction adenosine 3',5'-bisphosphate(in) + AMP(out) = adenosine 3',5'-bisphosphate(out) + AMP(in). It carries out the reaction FAD(in) + CoA(out) = FAD(out) + CoA(in). The enzyme catalyses FAD(in) + adenosine 3',5'-bisphosphate(out) = FAD(out) + adenosine 3',5'-bisphosphate(in). The catalysed reaction is FMN(in) + CoA(out) = FMN(out) + CoA(in). It catalyses the reaction FMN(in) + adenosine 3',5'-bisphosphate(out) = FMN(out) + adenosine 3',5'-bisphosphate(in). It carries out the reaction FAD(out) + NAD(+)(in) = FAD(in) + NAD(+)(out). The enzyme catalyses FMN(out) + NAD(+)(in) = FMN(in) + NAD(+)(out). The catalysed reaction is NAD(+)(in) + CoA(out) = NAD(+)(out) + CoA(in). It catalyses the reaction adenosine 3',5'-bisphosphate(out) + NAD(+)(in) = adenosine 3',5'-bisphosphate(in) + NAD(+)(out). It carries out the reaction FMN(out) + ADP(in) = FMN(in) + ADP(out). The enzyme catalyses FAD(out) + ADP(in) = FAD(in) + ADP(out). The catalysed reaction is ADP(out) + CoA(in) = ADP(in) + CoA(out). It catalyses the reaction adenosine 3',5'-bisphosphate(in) + ADP(out) = adenosine 3',5'-bisphosphate(out) + ADP(in). Peroxisomal transporter for multiple cofactors like coenzyme A (CoA), flavin adenine dinucleotide (FAD), flavin mononucleotide (FMN) and nucleotide adenosine monophosphate (AMP), and to a lesser extent for nicotinamide adenine dinucleotide (NAD(+)), adenosine diphosphate (ADP) and adenosine 3',5'-diphosphate (PAP). May catalyze the transport of free CoA, FAD and NAD(+) from the cytosol into the peroxisomal matrix by a counter-exchange mechanism. The sequence is that of Peroxisomal membrane protein PMP34 (Slc25a17) from Mus musculus (Mouse).